A 429-amino-acid chain; its full sequence is Serine hydroxymethyltransferase (429 aa).

(6S)-5,6,7,8-tetrahydrofolate contacts are provided by residues L126 and 130–132; that span reads GHL. K235 carries the N6-(pyridoxal phosphate)lysine modification.

This sequence belongs to the SHMT family. In terms of assembly, homodimer. Pyridoxal 5'-phosphate serves as cofactor.

The protein localises to the cytoplasm. It carries out the reaction (6R)-5,10-methylene-5,6,7,8-tetrahydrofolate + glycine + H2O = (6S)-5,6,7,8-tetrahydrofolate + L-serine. The protein operates within one-carbon metabolism; tetrahydrofolate interconversion. It participates in amino-acid biosynthesis; glycine biosynthesis; glycine from L-serine: step 1/1. Catalyzes the reversible interconversion of serine and glycine with tetrahydrofolate (THF) serving as the one-carbon carrier. This reaction serves as the major source of one-carbon groups required for the biosynthesis of purines, thymidylate, methionine, and other important biomolecules. Also exhibits THF-independent aldolase activity toward beta-hydroxyamino acids, producing glycine and aldehydes, via a retro-aldol mechanism. The chain is Serine hydroxymethyltransferase from Zymomonas mobilis subsp. mobilis (strain ATCC 31821 / ZM4 / CP4).